The sequence spans 317 residues: Apolipoprotein E (317 aa).

Residues 1–18 (MKALWVALVVTLLAGCRA) form the signal peptide. 8 tandem repeats follow at residues 79–100 (ALMEETMKEVKAYKAELEEQLS), 101–122 (PVAQETRARLSKELQAAQARLG), 123–144 (TDMEDLRSRLAHYRNEVQAMLG), 145–166 (QTTDELRNRLASHLRKLRKRLL), 167–188 (RDAEDLQKRLAVYRAGAVEGAE), 189–210 (RSVSALRERLGPLVEQGRLGTA), 211–232 (TTSTLGSQPLRERAEAWGQKLR), and 233–254 (GRLEAVGARAQDRLDKMREQLE). The segment at 79 to 254 (ALMEETMKEV…RLDKMREQLE (176 aa)) is 8 X 22 AA approximate tandem repeats. A Methionine sulfoxide modification is found at methionine 142. The tract at residues 157–167 (HLRKLRKRLLR) is LDL and other lipoprotein receptors binding. Heparin is bound at residue 161-164 (LRKR). The segment at 209 to 289 (TATTSTLGSQ…GWFQPLVEDL (81 aa)) is lipid-binding and lipoprotein association. The O-linked (GalNAc...) threonine glycan is linked to threonine 211. Heparin is bound at residue 228–235 (GQKLRGRL). The interval 265-317 (SQMRLQAETFQARLKGWFQPLVEDLQRQWAGLVEKVQQLAVGTTPTPAASKNQ) is homooligomerization. Residues 277 to 289 (RLKGWFQPLVEDL) are specificity for association with VLDL. The O-linked (GalNAc...) threonine glycan is linked to threonine 310.

Belongs to the apolipoprotein A1/A4/E family. In terms of assembly, homotetramer. May interact with ABCA1; functionally associated with ABCA1 in the biogenesis of HDLs. May interact with APP/A4 amyloid-beta peptide; the interaction is extremely stable in vitro but its physiological significance is unclear. May interact with MAPT. May interact with MAP2. In the cerebrospinal fluid, interacts with secreted SORL1. Interacts with PMEL; this allows the loading of PMEL luminal fragment on ILVs to induce fibril nucleation. Post-translationally, APOE exists as multiple glycosylated and sialylated glycoforms within cells and in plasma. The extent of glycosylation and sialylation are tissue and context specific. Glycated in plasma VLDL. In terms of processing, phosphorylated by FAM20C in the extracellular medium.

The protein resides in the secreted. It is found in the extracellular space. The protein localises to the extracellular matrix. Its subcellular location is the extracellular vesicle. It localises to the endosome. The protein resides in the multivesicular body. Its function is as follows. APOE is an apolipoprotein, a protein associating with lipid particles, that mainly functions in lipoprotein-mediated lipid transport between organs via the plasma and interstitial fluids. APOE is a core component of plasma lipoproteins and is involved in their production, conversion and clearance. Apolipoproteins are amphipathic molecules that interact both with lipids of the lipoprotein particle core and the aqueous environment of the plasma. As such, APOE associates with chylomicrons, chylomicron remnants, very low density lipoproteins (VLDL) and intermediate density lipoproteins (IDL) but shows a preferential binding to high-density lipoproteins (HDL). It also binds a wide range of cellular receptors including the LDL receptor/LDLR and the very low-density lipoprotein receptor/VLDLR that mediate the cellular uptake of the APOE-containing lipoprotein particles. Finally, APOE also has a heparin-binding activity and binds heparan-sulfate proteoglycans on the surface of cells, a property that supports the capture and the receptor-mediated uptake of APOE-containing lipoproteins by cells. In Camelus dromedarius (Dromedary), this protein is Apolipoprotein E (APOE).